A 177-amino-acid polypeptide reads, in one-letter code: Thymidine kinase (177 aa).

Residue 11–18 (GPMFSGKS) coordinates ATP. Glu83 serves as the catalytic Proton acceptor. Position 113 (Phe113) interacts with substrate. Zn(2+)-binding residues include Cys138 and Cys141. 157–161 (IEIIG) is a binding site for substrate. Zn(2+) is bound by residues Cys170 and Cys173.

Belongs to the thymidine kinase family. Homotetramer. Two molecules of substrate bind to each enzyme tetramer.

It catalyses the reaction thymidine + ATP = dTMP + ADP + H(+). Its function is as follows. Phosphorylates thymidine and thymidine analogs, such as azidothymidine (AZT). Part of the salvage pathway for pyrimidine deoxyribonucleotide synthesis. This Variola virus (isolate Human/India/Ind3/1967) (VARV) protein is Thymidine kinase (OPG101).